A 423-amino-acid chain; its full sequence is Serine hydroxymethyltransferase (423 aa).

(6S)-5,6,7,8-tetrahydrofolate is bound at residue 119-121 (GHI). N6-(pyridoxal phosphate)lysine is present on K225.

It belongs to the SHMT family. As to quaternary structure, homodimer. Requires pyridoxal 5'-phosphate as cofactor.

Its subcellular location is the cytoplasm. It catalyses the reaction (6R)-5,10-methylene-5,6,7,8-tetrahydrofolate + glycine + H2O = (6S)-5,6,7,8-tetrahydrofolate + L-serine. It participates in one-carbon metabolism; tetrahydrofolate interconversion. The protein operates within amino-acid biosynthesis; glycine biosynthesis; glycine from L-serine: step 1/1. In terms of biological role, catalyzes the reversible interconversion of serine and glycine with tetrahydrofolate (THF) serving as the one-carbon carrier. Also exhibits THF-independent aldolase activity toward beta-hydroxyamino acids, producing glycine and aldehydes, via a retro-aldol mechanism. The chain is Serine hydroxymethyltransferase from Methanocella arvoryzae (strain DSM 22066 / NBRC 105507 / MRE50).